The following is an 83-amino-acid chain: Mitotic-spindle organizing protein 1 (83 aa).

It belongs to the MOZART1 family. In terms of assembly, part of the gamma-tubulin complex.

The protein localises to the cytoplasm. It is found in the cytoskeleton. Its subcellular location is the microtubule organizing center. The protein resides in the spindle pole body. Functionally, required for gamma-tubulin complex recruitment to the microtubule organizing center (MTOC). The sequence is that of Mitotic-spindle organizing protein 1 from Botryotinia fuckeliana (strain B05.10) (Noble rot fungus).